Consider the following 61-residue polypeptide: UPF0434 protein MS0934 (61 aa).

It belongs to the UPF0434 family.

The sequence is that of UPF0434 protein MS0934 from Mannheimia succiniciproducens (strain KCTC 0769BP / MBEL55E).